We begin with the raw amino-acid sequence, 271 residues long: Ribosomal RNA small subunit methyltransferase A (271 aa).

Positions 11, 13, 38, 58, 86, and 101 each coordinate S-adenosyl-L-methionine.

It belongs to the class I-like SAM-binding methyltransferase superfamily. rRNA adenine N(6)-methyltransferase family. RsmA subfamily.

Its subcellular location is the cytoplasm. It catalyses the reaction adenosine(1518)/adenosine(1519) in 16S rRNA + 4 S-adenosyl-L-methionine = N(6)-dimethyladenosine(1518)/N(6)-dimethyladenosine(1519) in 16S rRNA + 4 S-adenosyl-L-homocysteine + 4 H(+). Specifically dimethylates two adjacent adenosines (A1518 and A1519) in the loop of a conserved hairpin near the 3'-end of 16S rRNA in the 30S particle. May play a critical role in biogenesis of 30S subunits. This chain is Ribosomal RNA small subunit methyltransferase A, found in Helicobacter pylori (strain ATCC 700392 / 26695) (Campylobacter pylori).